The chain runs to 205 residues: Cytochrome c oxidase subunit 2 (205 aa).

Cu cation-binding residues include H115, C150, E152, C154, H158, and M161. Mg(2+) is bound at residue E152.

This sequence belongs to the cytochrome c oxidase subunit 2 family. In terms of assembly, component of the cytochrome c oxidase (complex IV, CIV), a multisubunit enzyme composed of a catalytic core of 3 subunits and several supernumerary subunits. The complex exists as a monomer or a dimer and forms supercomplexes (SCs) in the inner mitochondrial membrane with ubiquinol-cytochrome c oxidoreductase (cytochrome b-c1 complex, complex III, CIII). It depends on Cu cation as a cofactor.

It localises to the mitochondrion inner membrane. The catalysed reaction is 4 Fe(II)-[cytochrome c] + O2 + 8 H(+)(in) = 4 Fe(III)-[cytochrome c] + 2 H2O + 4 H(+)(out). Functionally, component of the cytochrome c oxidase, the last enzyme in the mitochondrial electron transport chain which drives oxidative phosphorylation. The respiratory chain contains 3 multisubunit complexes succinate dehydrogenase (complex II, CII), ubiquinol-cytochrome c oxidoreductase (cytochrome b-c1 complex, complex III, CIII) and cytochrome c oxidase (complex IV, CIV), that cooperate to transfer electrons derived from NADH and succinate to molecular oxygen, creating an electrochemical gradient over the inner membrane that drives transmembrane transport and the ATP synthase. Cytochrome c oxidase is the component of the respiratory chain that catalyzes the reduction of oxygen to water. Electrons originating from reduced cytochrome c in the intermembrane space (IMS) are transferred via the dinuclear copper A center (CU(A)) of subunit 2 and heme A of subunit 1 to the active site in subunit 1, a binuclear center (BNC) formed by heme A3 and copper B (CU(B)). The BNC reduces molecular oxygen to 2 water molecules using 4 electrons from cytochrome c in the IMS and 4 protons from the mitochondrial matrix. In Paramecium tetraurelia, this protein is Cytochrome c oxidase subunit 2 (COII).